The primary structure comprises 180 residues: Large ribosomal subunit protein uL5 (180 aa).

Belongs to the universal ribosomal protein uL5 family. Part of the 50S ribosomal subunit; part of the 5S rRNA/L5/L18/L25 subcomplex. Contacts the 5S rRNA and the P site tRNA. Forms a bridge to the 30S subunit in the 70S ribosome.

In terms of biological role, this is one of the proteins that bind and probably mediate the attachment of the 5S RNA into the large ribosomal subunit, where it forms part of the central protuberance. In the 70S ribosome it contacts protein S13 of the 30S subunit (bridge B1b), connecting the 2 subunits; this bridge is implicated in subunit movement. Contacts the P site tRNA; the 5S rRNA and some of its associated proteins might help stabilize positioning of ribosome-bound tRNAs. The sequence is that of Large ribosomal subunit protein uL5 from Ligilactobacillus salivarius (strain UCC118) (Lactobacillus salivarius).